The sequence spans 225 residues: Uracil-DNA glycosylase (225 aa).

The active-site Proton acceptor is D68.

This sequence belongs to the uracil-DNA glycosylase (UDG) superfamily. UNG family.

The protein resides in the cytoplasm. It carries out the reaction Hydrolyzes single-stranded DNA or mismatched double-stranded DNA and polynucleotides, releasing free uracil.. Its function is as follows. Excises uracil residues from the DNA which can arise as a result of misincorporation of dUMP residues by DNA polymerase or due to deamination of cytosine. The chain is Uracil-DNA glycosylase from Mycolicibacterium gilvum (strain PYR-GCK) (Mycobacterium gilvum (strain PYR-GCK)).